A 72-amino-acid polypeptide reads, in one-letter code: Translation initiation factor IF-1 (72 aa).

Residues 1-72 (MAKEELLEFP…TKGRITYRFK (72 aa)) enclose the S1-like domain.

Belongs to the IF-1 family. As to quaternary structure, component of the 30S ribosomal translation pre-initiation complex which assembles on the 30S ribosome in the order IF-2 and IF-3, IF-1 and N-formylmethionyl-tRNA(fMet); mRNA recruitment can occur at any time during PIC assembly.

The protein localises to the cytoplasm. In terms of biological role, one of the essential components for the initiation of protein synthesis. Stabilizes the binding of IF-2 and IF-3 on the 30S subunit to which N-formylmethionyl-tRNA(fMet) subsequently binds. Helps modulate mRNA selection, yielding the 30S pre-initiation complex (PIC). Upon addition of the 50S ribosomal subunit IF-1, IF-2 and IF-3 are released leaving the mature 70S translation initiation complex. This is Translation initiation factor IF-1 from Maricaulis maris (strain MCS10) (Caulobacter maris).